A 194-amino-acid chain; its full sequence is dTTP/UTP pyrophosphatase (194 aa).

The Proton acceptor role is filled by Asp-77.

It belongs to the Maf family. YhdE subfamily. Requires a divalent metal cation as cofactor.

The protein localises to the cytoplasm. The enzyme catalyses dTTP + H2O = dTMP + diphosphate + H(+). It carries out the reaction UTP + H2O = UMP + diphosphate + H(+). Its function is as follows. Nucleoside triphosphate pyrophosphatase that hydrolyzes dTTP and UTP. May have a dual role in cell division arrest and in preventing the incorporation of modified nucleotides into cellular nucleic acids. This is dTTP/UTP pyrophosphatase from Flavobacterium johnsoniae (strain ATCC 17061 / DSM 2064 / JCM 8514 / BCRC 14874 / CCUG 350202 / NBRC 14942 / NCIMB 11054 / UW101) (Cytophaga johnsonae).